Consider the following 228-residue polypeptide: Small ribosomal subunit protein uS3 (228 aa).

The region spanning 39-107 is the KH type-2 domain; that stretch reads VRAYLQDKLK…PVHINIEEIR (69 aa).

Belongs to the universal ribosomal protein uS3 family. Part of the 30S ribosomal subunit. Forms a tight complex with proteins S10 and S14.

In terms of biological role, binds the lower part of the 30S subunit head. Binds mRNA in the 70S ribosome, positioning it for translation. In Ectopseudomonas mendocina (strain ymp) (Pseudomonas mendocina), this protein is Small ribosomal subunit protein uS3.